The primary structure comprises 328 residues: Aspartate carbamoyltransferase catalytic subunit (328 aa).

Carbamoyl phosphate contacts are provided by arginine 64 and threonine 65. Residue lysine 92 coordinates L-aspartate. The carbamoyl phosphate site is built by arginine 114, histidine 144, and glutamine 147. L-aspartate-binding residues include arginine 177 and arginine 232. Residues glycine 273 and proline 274 each contribute to the carbamoyl phosphate site.

It belongs to the aspartate/ornithine carbamoyltransferase superfamily. ATCase family. As to quaternary structure, heterododecamer (2C3:3R2) of six catalytic PyrB chains organized as two trimers (C3), and six regulatory PyrI chains organized as three dimers (R2).

It carries out the reaction carbamoyl phosphate + L-aspartate = N-carbamoyl-L-aspartate + phosphate + H(+). It functions in the pathway pyrimidine metabolism; UMP biosynthesis via de novo pathway; (S)-dihydroorotate from bicarbonate: step 2/3. Functionally, catalyzes the condensation of carbamoyl phosphate and aspartate to form carbamoyl aspartate and inorganic phosphate, the committed step in the de novo pyrimidine nucleotide biosynthesis pathway. The chain is Aspartate carbamoyltransferase catalytic subunit from Halorhodospira halophila (strain DSM 244 / SL1) (Ectothiorhodospira halophila (strain DSM 244 / SL1)).